The chain runs to 427 residues: Gamma-glutamyl phosphate reductase (427 aa).

This sequence belongs to the gamma-glutamyl phosphate reductase family.

It localises to the cytoplasm. It catalyses the reaction L-glutamate 5-semialdehyde + phosphate + NADP(+) = L-glutamyl 5-phosphate + NADPH + H(+). The protein operates within amino-acid biosynthesis; L-proline biosynthesis; L-glutamate 5-semialdehyde from L-glutamate: step 2/2. Functionally, catalyzes the NADPH-dependent reduction of L-glutamate 5-phosphate into L-glutamate 5-semialdehyde and phosphate. The product spontaneously undergoes cyclization to form 1-pyrroline-5-carboxylate. This chain is Gamma-glutamyl phosphate reductase, found in Rhizobium johnstonii (strain DSM 114642 / LMG 32736 / 3841) (Rhizobium leguminosarum bv. viciae).